The primary structure comprises 124 residues: Small ribosomal subunit protein uS12 (124 aa).

Position 89 is a 3-methylthioaspartic acid (D89). The segment at Q105 to K124 is disordered. Positions G111–K124 are enriched in basic residues.

Belongs to the universal ribosomal protein uS12 family. As to quaternary structure, part of the 30S ribosomal subunit. Contacts proteins S8 and S17. May interact with IF1 in the 30S initiation complex.

Its function is as follows. With S4 and S5 plays an important role in translational accuracy. In terms of biological role, interacts with and stabilizes bases of the 16S rRNA that are involved in tRNA selection in the A site and with the mRNA backbone. Located at the interface of the 30S and 50S subunits, it traverses the body of the 30S subunit contacting proteins on the other side and probably holding the rRNA structure together. The combined cluster of proteins S8, S12 and S17 appears to hold together the shoulder and platform of the 30S subunit. The protein is Small ribosomal subunit protein uS12 of Micrococcus luteus (Micrococcus lysodeikticus).